The following is a 473-amino-acid chain: MSNHDPLTLKLSLREKCAYGVGDFGSNLMLCIGTLYLLKFYTDELGMPAYYGGIIFLVAKFFTAFTDMLTGVLLDSRRNIGAKGKFRPFILYASFPVALVATAQFFATHFTLPVKTAFATVLFMLFGLFYSLMNCSYGAMVPAITKNPHERAQLAAWRQGGATIGLLLCTVGFMPIQALFTRSPSLGYLIAAVIFSVCGLFSMWWCFSGVKERYIETVPDTHKPSILKSFCAIFRNPPLLVLCVANLCTLAAFNIKLAIQVYYTQYVLNDIHLLSWMGFFSMGCILIGVLLVPAAVKRFGKKQVYLGGLILWAVGDILNFIWGGTSFLFVIFSCIAFFGTAFVNSLNWALVPDTVDYGEWKTGIRAEGSVYTGYTFSRKISAALAGFLPGIMLTQIGYIPNIAQSDTTLLGLRQLIFLWPCGLAIIAALTMGFFYKLNEQRFAFIIEEIAQRKKTGNQIVATNNKQSISTVNN.

Transmembrane regions (helical) follow at residues 18–38 (AYGVGDFGSNLMLCIGTLYLL), 45–65 (LGMPAYYGGIIFLVAKFFTAF), 88–108 (PFILYASFPVALVATAQFFAT), 110–130 (FTLPVKTAFATVLFMLFGLFY), 160–180 (GGATIGLLLCTVGFMPIQALF), 187–207 (GYLIAAVIFSVCGLFSMWWCF), 239–259 (LLVLCVANLCTLAAFNIKLAI), 276–296 (WMGFFSMGCILIGVLLVPAAV), 317–337 (ILNFIWGGTSFLFVIFSCIAF), 380–400 (ISAALAGFLPGIMLTQIGYIP), and 415–435 (LIFLWPCGLAIIAALTMGFFY).

It belongs to the sodium:galactoside symporter (TC 2.A.2) family.

The protein localises to the cell inner membrane. Functionally, could be involved in sulfoquinovose import. The sequence is that of Putative sulfoquinovose importer (yihO) from Salmonella typhimurium (strain LT2 / SGSC1412 / ATCC 700720).